Consider the following 369-residue polypeptide: Flagellar P-ring protein (369 aa).

The first 22 residues, 1–22 (MTKFKHLLALAALLLAAGAAQA), serve as a signal peptide directing secretion.

The protein belongs to the FlgI family. The basal body constitutes a major portion of the flagellar organelle and consists of four rings (L,P,S, and M) mounted on a central rod.

It localises to the periplasm. The protein localises to the bacterial flagellum basal body. Functionally, assembles around the rod to form the L-ring and probably protects the motor/basal body from shearing forces during rotation. This Pseudomonas aeruginosa (strain LESB58) protein is Flagellar P-ring protein.